An 898-amino-acid chain; its full sequence is Fasciclin-2 (898 aa).

Positions 1-22 (MRTVACAVLLACFMGCLAGAWA) are cleaved as a signal peptide. Residues 23-764 (QSAGLEILPN…EDGSEGQMSS (742 aa)) are Extracellular-facing. Ig-like C2-type domains lie at 31-124 (PNSE…KQLS), 134-219 (PITW…RPIR), 226-316 (PQMS…VEVT), 321-423 (PRIG…GHLM), and 428-525 (PSFA…IMLR). N-linked (GlcNAc...) asparagine glycosylation is found at asparagine 35, asparagine 51, asparagine 149, asparagine 192, asparagine 297, and asparagine 328. The cysteines at positions 48 and 113 are disulfide-linked. 2 disulfide bridges follow: cysteine 156-cysteine 203 and cysteine 248-cysteine 300. A disulfide bond links cysteine 343 and cysteine 407. Residues asparagine 447, asparagine 457, and asparagine 580 are each glycosylated (N-linked (GlcNAc...) asparagine). A disulfide bridge links cysteine 450 with cysteine 509. Fibronectin type-III domains lie at 532–626 (AVLQ…TPRI) and 644–745 (GTEN…VKDP). The chain crosses the membrane as a helical span at residues 765–782 (AAIVVLVVAALLLALLVV). At 783-898 (DLVCCLVWRG…TSFVGKDSAV (116 aa)) the chain is on the cytoplasmic side.

Its subcellular location is the membrane. Functionally, neuronal recognition molecule. Involved in a pathway recognition for axons during the development of nerve fascicles. The polypeptide is Fasciclin-2 (FAS2) (Schistocerca americana (American grasshopper)).